Reading from the N-terminus, the 287-residue chain is Proteasome subunit alpha (287 aa).

The interval 241 to 287 (GVVAGEEPHTAAHAPSVPQPGAPAGLGDPGAPDTGGTAGSGGEAPTT) is disordered. Over residues 262–275 (APAGLGDPGAPDTG) the composition is skewed to low complexity. The span at 276–287 (GTAGSGGEAPTT) shows a compositional bias: gly residues.

This sequence belongs to the peptidase T1A family. The 20S proteasome core is composed of 14 alpha and 14 beta subunits that assemble into four stacked heptameric rings, resulting in a barrel-shaped structure. The two inner rings, each composed of seven catalytic beta subunits, are sandwiched by two outer rings, each composed of seven alpha subunits. The catalytic chamber with the active sites is on the inside of the barrel. Has a gated structure, the ends of the cylinder being occluded by the N-termini of the alpha-subunits. Is capped by the proteasome-associated ATPase, ARC.

The protein resides in the cytoplasm. Its pathway is protein degradation; proteasomal Pup-dependent pathway. With respect to regulation, the formation of the proteasomal ATPase ARC-20S proteasome complex, likely via the docking of the C-termini of ARC into the intersubunit pockets in the alpha-rings, may trigger opening of the gate for substrate entry. Interconversion between the open-gate and close-gate conformations leads to a dynamic regulation of the 20S proteasome proteolysis activity. Functionally, component of the proteasome core, a large protease complex with broad specificity involved in protein degradation. In Geodermatophilus obscurus (strain ATCC 25078 / DSM 43160 / JCM 3152 / CCUG 61914 / KCC A-0152 / KCTC 9177 / NBRC 13315 / NRRL B-3577 / G-20), this protein is Proteasome subunit alpha.